Here is a 137-residue protein sequence, read N- to C-terminus: Peptide methionine sulfoxide reductase MsrB (137 aa).

Positions 7-129 (PEELKNGLSE…NSASLSFTDE (123 aa)) constitute a MsrB domain. The Zn(2+) site is built by Cys46, Cys49, Cys95, and Cys98. Cys118 acts as the Nucleophile in catalysis.

It belongs to the MsrB Met sulfoxide reductase family. The cofactor is Zn(2+).

The enzyme catalyses L-methionyl-[protein] + [thioredoxin]-disulfide + H2O = L-methionyl-(R)-S-oxide-[protein] + [thioredoxin]-dithiol. This Klebsiella pneumoniae subsp. pneumoniae (strain ATCC 700721 / MGH 78578) protein is Peptide methionine sulfoxide reductase MsrB.